A 410-amino-acid polypeptide reads, in one-letter code: Platelet-activating factor acetylhydrolase IB subunit alpha (410 aa).

The required for self-association and interaction with PAFAH1B2 and PAFAH1B3 stretch occupies residues 1-38 (MVLSQRQRDELNRAIADYLRSNGYEEAYSVFKKEAELD). Residues 1 to 66 (MVLSQRQRDE…SVIRLQKKVM (66 aa)) form an interaction with NDE1 region. Residues 1–102 (MVLSQRQRDE…EWIPRPPEKY (102 aa)) form an interaction with NDEL1 region. The LisH domain maps to 7-39 (QRDELNRAIADYLRSNGYEEAYSVFKKEAELDM). Lys-53 carries the post-translational modification N6-acetyllysine. Positions 56 to 82 (TSVIRLQKKVMELESKLNEAKEEFTSG) form a coiled coil. The interval 83 to 410 (GPLGQKRDPK…DQTVKVWECR (328 aa)) is interaction with dynein and dynactin. 7 WD repeats span residues 106-147 (GHRS…RTLK), 148-187 (GHTDSVQDISFDHSGKLLASCSADMTIKLWDFQGFECIRT), 190-229 (GHDHNVSSVAIMPNGDHIVSASRDKTIKMWEVQTGYCVKT), 232-271 (GHREWVRMVRPNQDGTLIASCSNDQTVRVWVVATKECKAE), 274-333 (EHEH…CLMT), 336-377 (GHDN…KTLN), and 379-410 (HEHFVTSLDFHKTAPYVVTGFVDQTVKVWECR). Ser-109 carries the phosphoserine modification. An interaction with DCX region spans residues 367-409 (YKNKRCMKTLNAHEHFVTSLDFHKTAPYVVTGFVDQTVKVWEC). The tract at residues 388 to 410 (FHKTAPYVVTGFVDQTVKVWECR) is interaction with NDEL1.

Belongs to the WD repeat LIS1/nudF family. In terms of assembly, can self-associate. Component of the cytosolic PAF-AH (I) heterotetrameric enzyme, which is composed of PAFAH1B1 (beta), PAFAH1B2 (alpha2) and PAFAH1B3 (alpha1) subunits. The catalytic activity of the enzyme resides in the alpha1 (PAFAH1B3) and alpha2 (PAFAH1B2) subunits, whereas the beta subunit (PAFAH1B1) has regulatory activity. Trimer formation is not essential for the catalytic activity. Interacts with the catalytic dimer of PAF-AH (I) heterotetrameric enzyme: interacts with PAFAH1B2 homodimer (alpha2/alpha2 homodimer), PAFAH1B3 homodimer (alpha1/alpha1 homodimer) and PAFAH1B2-PAFAH1B3 heterodimer (alpha2/alpha1 heterodimer). Interacts with DCX, dynein, dynactin, IQGAP1, KATNB1, NDE1, NDEL1, NUDC and RSN. Interacts with DISC1, and this interaction is enhanced by NDEL1. Interacts with DAB1 when DAB1 is phosphorylated in response to RELN/reelin signaling. Interacts with INTS13. Interacts with DCDC1.

Its subcellular location is the cytoplasm. The protein localises to the cytoskeleton. The protein resides in the microtubule organizing center. It localises to the centrosome. It is found in the spindle. Its subcellular location is the nucleus membrane. Functionally, regulatory subunit (beta subunit) of the cytosolic type I platelet-activating factor (PAF) acetylhydrolase (PAF-AH (I)), an enzyme that catalyzes the hydrolyze of the acetyl group at the sn-2 position of PAF and its analogs and participates in PAF inactivation. Regulates the PAF-AH (I) activity in a catalytic dimer composition-dependent manner. Positively regulates the activity of the minus-end directed microtubule motor protein dynein. May enhance dynein-mediated microtubule sliding by targeting dynein to the microtubule plus end. Required for several dynein- and microtubule-dependent processes such as the maintenance of Golgi integrity, the peripheral transport of microtubule fragments and the coupling of the nucleus and centrosome. Required during brain development for the proliferation of neuronal precursors and the migration of newly formed neurons from the ventricular/subventricular zone toward the cortical plate. Neuronal migration involves a process called nucleokinesis, whereby migrating cells extend an anterior process into which the nucleus subsequently translocates. During nucleokinesis dynein at the nuclear surface may translocate the nucleus towards the centrosome by exerting force on centrosomal microtubules. Also required for proper activation of Rho GTPases and actin polymerization at the leading edge of locomoting cerebellar neurons and postmigratory hippocampal neurons in response to calcium influx triggered via NMDA receptors. May also play a role in other forms of cell locomotion including the migration of fibroblasts during wound healing. Required for dynein recruitment to microtubule plus ends and BICD2-bound cargos. May modulate the Reelin pathway through interaction of the PAF-AH (I) catalytic dimer with VLDLR. This Pan troglodytes (Chimpanzee) protein is Platelet-activating factor acetylhydrolase IB subunit alpha.